Consider the following 217-residue polypeptide: Probable transaldolase (217 aa).

Catalysis depends on lysine 85, which acts as the Schiff-base intermediate with substrate.

This sequence belongs to the transaldolase family. Type 3B subfamily.

It localises to the cytoplasm. The enzyme catalyses D-sedoheptulose 7-phosphate + D-glyceraldehyde 3-phosphate = D-erythrose 4-phosphate + beta-D-fructose 6-phosphate. It participates in carbohydrate degradation; pentose phosphate pathway; D-glyceraldehyde 3-phosphate and beta-D-fructose 6-phosphate from D-ribose 5-phosphate and D-xylulose 5-phosphate (non-oxidative stage): step 2/3. In terms of biological role, transaldolase is important for the balance of metabolites in the pentose-phosphate pathway. This Agathobacter rectalis (strain ATCC 33656 / DSM 3377 / JCM 17463 / KCTC 5835 / VPI 0990) (Eubacterium rectale) protein is Probable transaldolase.